A 301-amino-acid polypeptide reads, in one-letter code: 4-diphosphocytidyl-2-C-methyl-D-erythritol kinase (301 aa).

The active site involves Lys-18. An ATP-binding site is contributed by 109 to 119; it reads PIASGIGGGSA. The active site involves Asp-151.

This sequence belongs to the GHMP kinase family. IspE subfamily.

It carries out the reaction 4-CDP-2-C-methyl-D-erythritol + ATP = 4-CDP-2-C-methyl-D-erythritol 2-phosphate + ADP + H(+). It functions in the pathway isoprenoid biosynthesis; isopentenyl diphosphate biosynthesis via DXP pathway; isopentenyl diphosphate from 1-deoxy-D-xylulose 5-phosphate: step 3/6. In terms of biological role, catalyzes the phosphorylation of the position 2 hydroxy group of 4-diphosphocytidyl-2C-methyl-D-erythritol. The protein is 4-diphosphocytidyl-2-C-methyl-D-erythritol kinase of Rhizobium meliloti (strain 1021) (Ensifer meliloti).